Here is a 456-residue protein sequence, read N- to C-terminus: Chromosomal replication initiator protein DnaA (456 aa).

The domain I, interacts with DnaA modulators stretch occupies residues 1 to 83; sequence MKLKILHFTS…DAFEEESNNG (83 aa). The tract at residues 83–116 is domain II; the sequence is GVRPEIHIKVKEKKENVKSLKNNKSMLYFNTNGL. The tract at residues 117-331 is domain III, AAA+ region; that stretch reads SLNPFYTFEN…GILSTINAHI (215 aa). Positions 161, 163, 164, and 165 each coordinate ATP. Residues 332-456 are domain IV, binds dsDNA; it reads NLSPESSSLK…SKIQQSLDSV (125 aa).

The protein belongs to the DnaA family. Oligomerizes as a right-handed, spiral filament on DNA at oriC.

It localises to the cytoplasm. Plays an essential role in the initiation and regulation of chromosomal replication. ATP-DnaA binds to the origin of replication (oriC) to initiate formation of the DNA replication initiation complex once per cell cycle. Binds the DnaA box (a 9 base pair repeat at the origin) and separates the double-stranded (ds)DNA. Forms a right-handed helical filament on oriC DNA; dsDNA binds to the exterior of the filament while single-stranded (ss)DNA is stabiized in the filament's interior. The ATP-DnaA-oriC complex binds and stabilizes one strand of the AT-rich DNA unwinding element (DUE), permitting loading of DNA polymerase. After initiation quickly degrades to an ADP-DnaA complex that is not apt for DNA replication. Binds acidic phospholipids. The protein is Chromosomal replication initiator protein DnaA of Helicobacter hepaticus (strain ATCC 51449 / 3B1).